A 259-amino-acid polypeptide reads, in one-letter code: Keratinocyte-associated transmembrane protein 2 (259 aa).

The N-terminal stretch at 1–44 (MAASALGRMCGAAREKLSPGPGARGLGALARSLVLALLLVPVLC) is a signal peptide. Over 45-190 (SDRSENPPNN…VKLPPPNRED (146 aa)) the chain is Extracellular. A disordered region spans residues 47–155 (RSENPPNNAT…YDWTTNPRDE (109 aa)). The segment covering 50-81 (NPPNNATVSSPVVVTAPGNHTSPSVSQISTTL) has biased composition (polar residues). Residues Asn54 and Asn68 are each glycosylated (N-linked (GlcNAc...) asparagine). Low complexity predominate over residues 82 to 104 (SPASAEKSGSSSAAPTPTAAPSA). The span at 105–122 (PEEEADSNEDPSMEEEDL) shows a compositional bias: acidic residues. Ser165 carries the phosphoserine modification. A helical transmembrane segment spans residues 191–211 (SHFFFHLLIFAFCAAVVYVTY). Over 212-259 (HNKRKIFLLVQSRKWRDGLCSKTVEYHRLDQNVNEAMPSLKITNDYIF) the chain is Cytoplasmic. Phosphoserine is present on residues Ser223 and Ser250.

Its subcellular location is the membrane. This is Keratinocyte-associated transmembrane protein 2 (Kct2) from Mus musculus (Mouse).